A 328-amino-acid polypeptide reads, in one-letter code: Malate dehydrogenase (328 aa).

11 to 17 is an NAD(+) binding site; the sequence is GAAGQIG. Arginine 92 and arginine 98 together coordinate substrate. NAD(+)-binding positions include asparagine 105, glutamine 112, and 129–131; that span reads VGN. 2 residues coordinate substrate: asparagine 131 and arginine 162. Residue histidine 187 is the Proton acceptor of the active site.

It belongs to the LDH/MDH superfamily. MDH type 2 family.

The catalysed reaction is (S)-malate + NAD(+) = oxaloacetate + NADH + H(+). Catalyzes the reversible oxidation of malate to oxaloacetate. The sequence is that of Malate dehydrogenase from Coxiella burnetii (strain RSA 493 / Nine Mile phase I).